Consider the following 588-residue polypeptide: MFS siderochrome iron transporter 1 (588 aa).

The next 13 helical transmembrane spans lie at 60–80 (QVWS…ITFV), 104–124 (LTAS…LPLA), 133–153 (PQGF…MAAC), 161–181 (AAQV…SIFI), 191–211 (ALMF…GGPL), 225–245 (YGAF…VFAW), 278–298 (IIGI…FSLY), 307–327 (SSLV…FALY), 348–368 (LGAC…DSYF), 385–405 (YIVN…GILV), 413–433 (WLAL…MITF), 440–460 (IGYI…CVIT), and 473–495 (YVAV…GQTV). N519 carries an N-linked (GlcNAc...) asparagine glycan. A helical transmembrane segment spans residues 552-572 (KYMLIGGTAILAVGLGATMMW).

The protein belongs to the major facilitator superfamily.

The protein resides in the membrane. In terms of biological role, major facilitator transporter involved in siderophore transport. This chain is MFS siderochrome iron transporter 1, found in Ajellomyces capsulatus (Darling's disease fungus).